The following is a 700-amino-acid chain: Glycine--tRNA ligase beta subunit (700 aa).

The protein belongs to the class-II aminoacyl-tRNA synthetase family. Tetramer of two alpha and two beta subunits.

The protein resides in the cytoplasm. It carries out the reaction tRNA(Gly) + glycine + ATP = glycyl-tRNA(Gly) + AMP + diphosphate. This chain is Glycine--tRNA ligase beta subunit, found in Helicobacter pylori (strain Shi470).